We begin with the raw amino-acid sequence, 270 residues long: Glutamate 5-kinase (270 aa).

Lys-15 is an ATP binding site. Substrate-binding residues include Ser-55, Asp-142, and Asn-158. Residues 178–179 (SD) and 220–226 (TGGMLSK) contribute to the ATP site.

It belongs to the glutamate 5-kinase family.

Its subcellular location is the cytoplasm. The catalysed reaction is L-glutamate + ATP = L-glutamyl 5-phosphate + ADP. Its pathway is amino-acid biosynthesis; L-proline biosynthesis; L-glutamate 5-semialdehyde from L-glutamate: step 1/2. Its function is as follows. Catalyzes the transfer of a phosphate group to glutamate to form L-glutamate 5-phosphate. The polypeptide is Glutamate 5-kinase (Streptococcus uberis (strain ATCC BAA-854 / 0140J)).